Consider the following 416-residue polypeptide: 3-oxoacyl-[acyl-carrier-protein] synthase 2 (416 aa).

Residues 6 to 414 (KKRVVVTGLG…GHNVTLAFKK (409 aa)) enclose the Ketosynthase family 3 (KS3) domain. Catalysis depends on for beta-ketoacyl synthase activity residues Cys-167, His-307, and His-344.

It belongs to the thiolase-like superfamily. Beta-ketoacyl-ACP synthases family. In terms of assembly, homodimer.

The enzyme catalyses a fatty acyl-[ACP] + malonyl-[ACP] + H(+) = a 3-oxoacyl-[ACP] + holo-[ACP] + CO2. The catalysed reaction is (9Z)-hexadecenoyl-[ACP] + malonyl-[ACP] + H(+) = 3-oxo-(11Z)-octadecenoyl-[ACP] + holo-[ACP] + CO2. It participates in lipid metabolism; fatty acid biosynthesis. Functionally, involved in the type II fatty acid elongation cycle. Catalyzes the elongation of a wide range of acyl-ACP by the addition of two carbons from malonyl-ACP to an acyl acceptor. Can efficiently catalyze the conversion of palmitoleoyl-ACP (cis-hexadec-9-enoyl-ACP) to cis-vaccenoyl-ACP (cis-octadec-11-enoyl-ACP), an essential step in the thermal regulation of fatty acid composition. In Synechocystis sp. (strain ATCC 27184 / PCC 6803 / Kazusa), this protein is 3-oxoacyl-[acyl-carrier-protein] synthase 2 (fabF).